Here is a 901-residue protein sequence, read N- to C-terminus: MLIKLLTKVFGSRNDRTLRRMRKVVNIINAMEPEMEKLSDEELKGKTAEFRARLEKGEVLENLIPEAFAVVREASKRVFGMRHFDVQLLGGMVLNERCIAEMRTGEGKTLTATLPAYLNALTGKGVHVVTVNDYLAQRDAENNRPLFEFLGLTVGINLPGMPAPAKREAYAADITYGTNNEYGFDYLRDNMAFSPEERVQRKLHYALVDEVDSILIDEARTPLIISGPAEDSSEMYKRVNKIIPHLIRQEKEDSETFQGEGHFSVDEKSRQVNLTERGLVLIEELLVKEGIMDEGESLYSPANIMLMHHVTAALRAHALFTRDVDYIVKDGEVIIVDEHTGRTMQGRRWSDGLHQAVEAKEGVQIQNENQTLASITFQNYFRLYEKLAGMTGTADTEAFEFSSIYKLDTVVVPTNRPMIRKDLPDLVYMTEAEKIQAIIEDIKERTAKGQPVLVGTISIEKSELVSNELTKAGIKHNVLNAKFHANEAAIVAQAGYPAAVTIATNMAGRGTDIVLGGSWQAEVAALENPTAEQIEKIKADWQVRHDAVLAAGGLHIIGTERHESRRIDNQLRGRSGRQGDAGSSRFYLSMEDALMRIFASDRVSGMMRKLGMKPGEAIEHPWVTKAIANAQRKVESRNFDIRKQLLEYDDVANDQRRAIYSQRNELLDVSDVSETINSIREDVFKATIDAYIPPQSLEEMWDIPGLQERLKNDFDLDLPIAEWLDKEPELHEETLRERILAQSIEVYQRKEEVVGAEMMRHFEKGVMLQTLDSLWKEHLAAMDYLRQGIHLRGYAQKDPKQEYKRESFSMFAAMLESLKYEVISTLSKVQVRMPEEVEELEQQRRMEAERLAQMQQLSYQDDDSAAAAALAAQTGERKVGRNDPCPCGSGKKYKQCHGRLQ.

ATP-binding positions include glutamine 87, 105–109 (GEGKT), and aspartate 512. The segment at 868–901 (AALAAQTGERKVGRNDPCPCGSGKKYKQCHGRLQ) is disordered. Zn(2+)-binding residues include cysteine 885, cysteine 887, cysteine 896, and histidine 897. Positions 891–901 (KKYKQCHGRLQ) are enriched in basic residues.

It belongs to the SecA family. As to quaternary structure, monomer and homodimer. Part of the essential Sec protein translocation apparatus which comprises SecA, SecYEG and auxiliary proteins SecDF-YajC and YidC. Zn(2+) is required as a cofactor.

Its subcellular location is the cell inner membrane. It localises to the cytoplasm. It catalyses the reaction ATP + H2O + cellular proteinSide 1 = ADP + phosphate + cellular proteinSide 2.. Its function is as follows. Part of the Sec protein translocase complex. Interacts with the SecYEG preprotein conducting channel. Has a central role in coupling the hydrolysis of ATP to the transfer of proteins into and across the cell membrane, serving both as a receptor for the preprotein-SecB complex and as an ATP-driven molecular motor driving the stepwise translocation of polypeptide chains across the membrane. The protein is Protein translocase subunit SecA of Escherichia coli O45:K1 (strain S88 / ExPEC).